Reading from the N-terminus, the 148-residue chain is Putative pre-16S rRNA nuclease (148 aa).

It belongs to the YqgF nuclease family.

The protein localises to the cytoplasm. Its function is as follows. Could be a nuclease involved in processing of the 5'-end of pre-16S rRNA. The protein is Putative pre-16S rRNA nuclease of Nitrosomonas europaea (strain ATCC 19718 / CIP 103999 / KCTC 2705 / NBRC 14298).